The chain runs to 257 residues: Undecaprenyl-diphosphatase (257 aa).

The next 7 helical transmembrane spans lie at 42–62 (YVLFNLICHLGTLGSILYMFL), 76–96 (IFHIILGTLPLFPLVLILKPI), 103–123 (PQYLGLCFLFSAALLFSGVYF), 136–156 (CLTIGLFQAVAVLPGISRSGA), 172–192 (IQFSFLLAIPAILGGTFLEIW), 209–229 (QFLTGFITSFMIGCASLWAVI), and 237–257 (WVYFAWYCLFIGIATTLYFQM).

This sequence belongs to the UppP family.

It localises to the cell inner membrane. The enzyme catalyses di-trans,octa-cis-undecaprenyl diphosphate + H2O = di-trans,octa-cis-undecaprenyl phosphate + phosphate + H(+). Its function is as follows. Catalyzes the dephosphorylation of undecaprenyl diphosphate (UPP). Confers resistance to bacitracin. This chain is Undecaprenyl-diphosphatase, found in Protochlamydia amoebophila (strain UWE25).